The following is a 317-amino-acid chain: MKNLAERSAGSLYWWLLATLFLPIAIPGLVLKLLTMMKEQRNARHLNGKVVLITGASSGLGEALAHSFFLAGCKVVLAARRKDELERVRKDLLELHATVPTHPPIILPLDLSDLNSIGGKVQSVLEIHGAIDILVNNGGISVRGDALSTAIDVDIRIMLVNYFGSVALTKACLPSMMARKEGRIVSISSVQGKFAIPHRSAYSASKHAMQAFCDSLRAEVAKDNIKVTLISPGYINTALSLNALTGTGASYGKMDAATAGGASPQDTASSILKAIARDEKDVMLAPIAPRAAYWLRHLAPSVYFWIMKKRAEKLNST.

Topologically, residues 1-10 are cytoplasmic; sequence MKNLAERSAG. A helical; Signal-anchor for type II membrane protein membrane pass occupies residues 11 to 31; the sequence is SLYWWLLATLFLPIAIPGLVL. Residues 32–317 lie on the Peroxisomal side of the membrane; that stretch reads KLLTMMKEQR…KKRAEKLNST (286 aa). 52-76 is a binding site for NAD(+); it reads LITGASSGLGEALAHSFFLAGCKVV. Position 189 (serine 189) interacts with substrate. Tyrosine 202 serves as the catalytic Proton acceptor.

Belongs to the short-chain dehydrogenases/reductases (SDR) family.

It is found in the peroxisome membrane. Its function is as follows. Putative oxidoreductase. The protein is Dehydrogenase/reductase SDR family protein 7-like of Anopheles gambiae (African malaria mosquito).